Consider the following 894-residue polypeptide: Sorting nexin-14 (894 aa).

The PXA domain occupies 78–252 (SSKVDASLSE…LLIIFIDDSP (175 aa)). An RGS domain is found at 284–416 (ELKQIREQQD…CHSDEYFRQL (133 aa)). Serine 496 bears the Phosphoserine mark. The PX domain occupies 518–638 (PYVDFFEDPS…DFLSPNGGET (121 aa)).

The protein belongs to the sorting nexin family.

The protein resides in the cytoplasm. It is found in the cell projection. Its subcellular location is the dendrite. Plays a role in maintaining normal neuronal excitability and synaptic transmission. May be involved in several stages of intracellular trafficking. The polypeptide is Sorting nexin-14 (SNX14) (Pongo abelii (Sumatran orangutan)).